The sequence spans 404 residues: Argininosuccinate synthase (404 aa).

ATP is bound by residues 10 to 18 (AYSGGLDTS) and A37. The L-citrulline site is built by Y88 and S93. G118 contributes to the ATP binding site. Residues T120, N124, and D125 each contribute to the L-aspartate site. N124 contacts L-citrulline. L-citrulline contacts are provided by R128, S178, S187, E263, and Y275.

Belongs to the argininosuccinate synthase family. Type 1 subfamily. In terms of assembly, homotetramer.

Its subcellular location is the cytoplasm. The enzyme catalyses L-citrulline + L-aspartate + ATP = 2-(N(omega)-L-arginino)succinate + AMP + diphosphate + H(+). Its pathway is amino-acid biosynthesis; L-arginine biosynthesis; L-arginine from L-ornithine and carbamoyl phosphate: step 2/3. This chain is Argininosuccinate synthase, found in Hahella chejuensis (strain KCTC 2396).